A 255-amino-acid chain; its full sequence is Taurine import ATP-binding protein TauB (255 aa).

An ABC transporter domain is found at 2 to 229 (LQISHLYADY…RFVAGESSRS (228 aa)). 34 to 41 (GPSGCGKT) is a binding site for ATP.

This sequence belongs to the ABC transporter superfamily. Taurine importer (TC 3.A.1.17.1) family. In terms of assembly, the complex is composed of two ATP-binding proteins (TauB), two transmembrane proteins (TauC) and a solute-binding protein (TauA).

The protein resides in the cell inner membrane. It carries out the reaction taurine(out) + ATP + H2O = taurine(in) + ADP + phosphate + H(+). In terms of biological role, part of the ABC transporter complex TauABC involved in taurine import. Responsible for energy coupling to the transport system. The polypeptide is Taurine import ATP-binding protein TauB (Escherichia coli O6:K15:H31 (strain 536 / UPEC)).